A 63-amino-acid polypeptide reads, in one-letter code: UPF0337 protein RA1131 (63 aa).

Residues 1–63 (MGSAKDKVAG…DAVKGAVDKT (63 aa)) are disordered. Low complexity predominate over residues 34 to 49 (AKGAAQEAKGGAQQAK). Positions 51 to 63 (KLKDAVKGAVDKT) are enriched in basic and acidic residues.

It belongs to the UPF0337 (CsbD) family.

This is UPF0337 protein RA1131 from Rhizobium meliloti (strain 1021) (Ensifer meliloti).